The primary structure comprises 613 residues: RNA polymerase sigma factor RpoD (613 aa).

The sigma-70 factor domain-1 stretch occupies residues 2–80 (EQNPQSQLKL…TADEDAAEAA (79 aa)). The segment at 176–213 (PTATHVGSELSQEDLDDDEDEDEEDGDDDSADDDNSID) is disordered. The segment covering 186-212 (SQEDLDDDEDEDEEDGDDDSADDDNSI) has biased composition (acidic residues). The segment at 379–449 (MVEANLRLVI…TRSIADQART (71 aa)) is sigma-70 factor domain-2. Positions 403-406 (DLIQ) match the Interaction with polymerase core subunit RpoC motif. A sigma-70 factor domain-3 region spans residues 458 to 534 (ETINKLNRIS…DTTLELPLDS (77 aa)). The interval 547–600 (VLAGLTAREAKVLRMRFGIDMNTDYTLEEVGKQFDVTRERIRQIEAKALRKLRH) is sigma-70 factor domain-4. Positions 573-592 (LEEVGKQFDVTRERIRQIEA) form a DNA-binding region, H-T-H motif. The tract at residues 584–599 (RERIRQIEAKALRKLR) is interaction with anti-sigma factors.

This sequence belongs to the sigma-70 factor family. RpoD/SigA subfamily. Interacts transiently with the RNA polymerase catalytic core formed by RpoA, RpoB, RpoC and RpoZ (2 alpha, 1 beta, 1 beta' and 1 omega subunit) to form the RNA polymerase holoenzyme that can initiate transcription. Identified in a complex containing RpoD, the RNA polymerase subunits RpoA, RpoB and RpoZ, CRP and DNA. Interacts with Rsd; this prevents interaction with the RNA polymerase catalytic core and with promoter DNA, and as a consequence, promotes transcription from promoters that require alternative sigma factors. Interacts with phage T4 AsiA; this interferes with binding to DNA and to the RNA polymerase. As to quaternary structure, (Microbial infection) Interacts with Escherichia phage lambda antitermination protein Q.

The protein resides in the cytoplasm. Its function is as follows. Sigma factors are initiation factors that promote the attachment of RNA polymerase to specific initiation sites and are then released. This sigma factor is the primary sigma factor during exponential growth. Preferentially transcribes genes associated with fast growth, such as ribosomal operons, other protein-synthesis related genes, rRNA- and tRNA-encoding genes and prfB. The protein is RNA polymerase sigma factor RpoD of Escherichia coli (strain K12).